A 97-amino-acid polypeptide reads, in one-letter code: Co-chaperonin GroES (97 aa).

The protein belongs to the GroES chaperonin family. In terms of assembly, heptamer of 7 subunits arranged in a ring. Interacts with the chaperonin GroEL.

The protein localises to the cytoplasm. In terms of biological role, together with the chaperonin GroEL, plays an essential role in assisting protein folding. The GroEL-GroES system forms a nano-cage that allows encapsulation of the non-native substrate proteins and provides a physical environment optimized to promote and accelerate protein folding. GroES binds to the apical surface of the GroEL ring, thereby capping the opening of the GroEL channel. This is Co-chaperonin GroES from Aeromonas salmonicida (strain A449).